We begin with the raw amino-acid sequence, 121 residues long: Oxalate-binding protein (121 aa).

Residues 49 to 117 enclose the Cupin type-2 domain; the sequence is RMKLPPGSSV…GNTDLEFLAV (69 aa). The Mn(2+) site is built by histidine 61, histidine 63, and glutamate 68. Residue tyrosine 70 coordinates oxalate. Mn(2+) is bound at residue histidine 102.

Homodimer.

In terms of biological role, binds oxalate. The sequence is that of Oxalate-binding protein from Thermotoga maritima (strain ATCC 43589 / DSM 3109 / JCM 10099 / NBRC 100826 / MSB8).